Consider the following 261-residue polypeptide: Hemin import ATP-binding protein HmuV (261 aa).

The ABC transporter domain maps to 7 to 243 (LRGQNLSLQF…EIIDAVYGYK (237 aa)). 39–46 (GPNGAGKS) serves as a coordination point for ATP.

This sequence belongs to the ABC transporter superfamily. Heme (hemin) importer (TC 3.A.1.14.5) family. As to quaternary structure, the complex is composed of two ATP-binding proteins (HmuV), two transmembrane proteins (HmuU) and a solute-binding protein (HmuT).

It is found in the cell inner membrane. Functionally, part of the ABC transporter complex HmuTUV involved in hemin import. Responsible for energy coupling to the transport system. In Vibrio vulnificus (strain YJ016), this protein is Hemin import ATP-binding protein HmuV.